The chain runs to 257 residues: UPF0246 protein PC1_3665 (257 aa).

The protein belongs to the UPF0246 family.

The polypeptide is UPF0246 protein PC1_3665 (Pectobacterium carotovorum subsp. carotovorum (strain PC1)).